A 143-amino-acid chain; its full sequence is D-aminoacyl-tRNA deacylase (143 aa).

Residues 135–136 (GP) carry the Gly-cisPro motif, important for rejection of L-amino acids motif.

This sequence belongs to the DTD family. Homodimer.

The protein resides in the cytoplasm. It carries out the reaction glycyl-tRNA(Ala) + H2O = tRNA(Ala) + glycine + H(+). The enzyme catalyses a D-aminoacyl-tRNA + H2O = a tRNA + a D-alpha-amino acid + H(+). Functionally, an aminoacyl-tRNA editing enzyme that deacylates mischarged D-aminoacyl-tRNAs. Also deacylates mischarged glycyl-tRNA(Ala), protecting cells against glycine mischarging by AlaRS. Acts via tRNA-based rather than protein-based catalysis; rejects L-amino acids rather than detecting D-amino acids in the active site. By recycling D-aminoacyl-tRNA to D-amino acids and free tRNA molecules, this enzyme counteracts the toxicity associated with the formation of D-aminoacyl-tRNA entities in vivo and helps enforce protein L-homochirality. The polypeptide is D-aminoacyl-tRNA deacylase (Mycolicibacterium smegmatis (strain ATCC 700084 / mc(2)155) (Mycobacterium smegmatis)).